The sequence spans 221 residues: Adenylate kinase (221 aa).

Residue 10–15 (GAGKGT) coordinates ATP. Residues 30–59 (STGDIFRQNLRDNTELGKLAKEYMDKGLLV) are NMP. AMP-binding positions include T31, R36, 57–59 (LLV), 85–88 (GYPR), and Q92. Positions 126–163 (GRRVCPVCGATYHIKTSPPKVDNVCDKCGSELIQRSDD) are LID. An ATP-binding site is contributed by R127. Zn(2+) is bound by residues C130 and C133. Residue 136 to 137 (TY) coordinates ATP. Zn(2+) is bound by residues C150 and C153. AMP is bound by residues R160 and R171. An ATP-binding site is contributed by K199.

This sequence belongs to the adenylate kinase family. In terms of assembly, monomer.

It localises to the cytoplasm. It carries out the reaction AMP + ATP = 2 ADP. Its pathway is purine metabolism; AMP biosynthesis via salvage pathway; AMP from ADP: step 1/1. Its function is as follows. Catalyzes the reversible transfer of the terminal phosphate group between ATP and AMP. Plays an important role in cellular energy homeostasis and in adenine nucleotide metabolism. The polypeptide is Adenylate kinase (Caldanaerobacter subterraneus subsp. tengcongensis (strain DSM 15242 / JCM 11007 / NBRC 100824 / MB4) (Thermoanaerobacter tengcongensis)).